Consider the following 67-residue polypeptide: ATP synthase F(0) complex subunit 8 (67 aa).

A helical transmembrane segment spans residues Thr8–Phe24. N6-acetyllysine; alternate is present on Lys54. Lys54 is modified (N6-succinyllysine; alternate). The residue at position 57 (Lys57) is an N6-acetyllysine.

Belongs to the ATPase protein 8 family. Component of the ATP synthase complex composed at least of ATP5F1A/subunit alpha, ATP5F1B/subunit beta, ATP5MC1/subunit c (homooctomer), MT-ATP6/subunit a, MT-ATP8/subunit 8, ATP5ME/subunit e, ATP5MF/subunit f, ATP5MG/subunit g, ATP5MK/subunit k, ATP5MJ/subunit j, ATP5F1C/subunit gamma, ATP5F1D/subunit delta, ATP5F1E/subunit epsilon, ATP5PF/subunit F6, ATP5PB/subunit b, ATP5PD/subunit d, ATP5PO/subunit OSCP. ATP synthase complex consists of a soluble F(1) head domain (subunits alpha(3) and beta(3)) - the catalytic core - and a membrane F(0) domain - the membrane proton channel (subunits c, a, 8, e, f, g, k and j). These two domains are linked by a central stalk (subunits gamma, delta, and epsilon) rotating inside the F1 region and a stationary peripheral stalk (subunits F6, b, d, and OSCP). Interacts with PRICKLE3.

The protein localises to the mitochondrion membrane. Subunit 8, of the mitochondrial membrane ATP synthase complex (F(1)F(0) ATP synthase or Complex V) that produces ATP from ADP in the presence of a proton gradient across the membrane which is generated by electron transport complexes of the respiratory chain. ATP synthase complex consist of a soluble F(1) head domain - the catalytic core - and a membrane F(1) domain - the membrane proton channel. These two domains are linked by a central stalk rotating inside the F(1) region and a stationary peripheral stalk. During catalysis, ATP synthesis in the catalytic domain of F(1) is coupled via a rotary mechanism of the central stalk subunits to proton translocation. In vivo, can only synthesize ATP although its ATP hydrolase activity can be activated artificially in vitro. Part of the complex F(0) domain. The polypeptide is ATP synthase F(0) complex subunit 8 (Felis catus (Cat)).